Here is a 248-residue protein sequence, read N- to C-terminus: Ribosomal RNA small subunit methyltransferase J (248 aa).

S-adenosyl-L-methionine is bound by residues 97–98, 113–114, and Asp167; these read RD and ER.

Belongs to the methyltransferase superfamily. RsmJ family.

It localises to the cytoplasm. The enzyme catalyses guanosine(1516) in 16S rRNA + S-adenosyl-L-methionine = N(2)-methylguanosine(1516) in 16S rRNA + S-adenosyl-L-homocysteine + H(+). In terms of biological role, specifically methylates the guanosine in position 1516 of 16S rRNA. The polypeptide is Ribosomal RNA small subunit methyltransferase J (Aeromonas hydrophila subsp. hydrophila (strain ATCC 7966 / DSM 30187 / BCRC 13018 / CCUG 14551 / JCM 1027 / KCTC 2358 / NCIMB 9240 / NCTC 8049)).